A 283-amino-acid polypeptide reads, in one-letter code: Glutamate racemase (283 aa).

Substrate is bound by residues 7 to 8 and 39 to 40; these read DS and YG. Cys70 acts as the Proton donor/acceptor in catalysis. 71-72 is a binding site for substrate; it reads NT. The active-site Proton donor/acceptor is the Cys206. 207 to 208 provides a ligand contact to substrate; it reads TH.

The protein belongs to the aspartate/glutamate racemases family.

The catalysed reaction is L-glutamate = D-glutamate. It functions in the pathway cell wall biogenesis; peptidoglycan biosynthesis. Functionally, provides the (R)-glutamate required for cell wall biosynthesis. The protein is Glutamate racemase of Caulobacter sp. (strain K31).